Consider the following 665-residue polypeptide: DNA ligase (665 aa).

NAD(+)-binding positions include 32-36 (DSEYD), 81-82 (SL), and glutamate 110. Lysine 112 (N6-AMP-lysine intermediate) is an active-site residue. NAD(+)-binding residues include arginine 133, glutamate 167, lysine 283, and lysine 307. Residues cysteine 401, cysteine 404, cysteine 419, and cysteine 424 each contribute to the Zn(2+) site. A BRCT domain is found at 586–665 (EGHPDFSGKT…AAFIEKQNGI (80 aa)).

The protein belongs to the NAD-dependent DNA ligase family. LigA subfamily. Mg(2+) is required as a cofactor. Mn(2+) serves as cofactor.

It carries out the reaction NAD(+) + (deoxyribonucleotide)n-3'-hydroxyl + 5'-phospho-(deoxyribonucleotide)m = (deoxyribonucleotide)n+m + AMP + beta-nicotinamide D-nucleotide.. Its function is as follows. DNA ligase that catalyzes the formation of phosphodiester linkages between 5'-phosphoryl and 3'-hydroxyl groups in double-stranded DNA using NAD as a coenzyme and as the energy source for the reaction. It is essential for DNA replication and repair of damaged DNA. This Staphylococcus epidermidis (strain ATCC 12228 / FDA PCI 1200) protein is DNA ligase.